We begin with the raw amino-acid sequence, 211 residues long: Uracil phosphoribosyltransferase (211 aa).

Residues Arg-78, Arg-103, and 130–138 (DPMLATGGT) contribute to the 5-phospho-alpha-D-ribose 1-diphosphate site. Uracil contacts are provided by residues Ile-195 and 200-202 (GDA). Asp-201 provides a ligand contact to 5-phospho-alpha-D-ribose 1-diphosphate.

It belongs to the UPRTase family. It depends on Mg(2+) as a cofactor.

It catalyses the reaction UMP + diphosphate = 5-phospho-alpha-D-ribose 1-diphosphate + uracil. The protein operates within pyrimidine metabolism; UMP biosynthesis via salvage pathway; UMP from uracil: step 1/1. Allosterically activated by GTP. In terms of biological role, catalyzes the conversion of uracil and 5-phospho-alpha-D-ribose 1-diphosphate (PRPP) to UMP and diphosphate. The chain is Uracil phosphoribosyltransferase from Streptomyces griseus subsp. griseus (strain JCM 4626 / CBS 651.72 / NBRC 13350 / KCC S-0626 / ISP 5235).